A 360-amino-acid chain; its full sequence is UDP-N-acetylglucosamine--N-acetylmuramyl-(pentapeptide) pyrophosphoryl-undecaprenol N-acetylglucosamine transferase (360 aa).

Residues 16–18 (TGG), Asn128, Arg165, Ser191, Ile247, 266–271 (ALTVSE), and Gln292 contribute to the UDP-N-acetyl-alpha-D-glucosamine site.

The protein belongs to the glycosyltransferase 28 family. MurG subfamily.

The protein resides in the cell inner membrane. It catalyses the reaction di-trans,octa-cis-undecaprenyl diphospho-N-acetyl-alpha-D-muramoyl-L-alanyl-D-glutamyl-meso-2,6-diaminopimeloyl-D-alanyl-D-alanine + UDP-N-acetyl-alpha-D-glucosamine = di-trans,octa-cis-undecaprenyl diphospho-[N-acetyl-alpha-D-glucosaminyl-(1-&gt;4)]-N-acetyl-alpha-D-muramoyl-L-alanyl-D-glutamyl-meso-2,6-diaminopimeloyl-D-alanyl-D-alanine + UDP + H(+). It participates in cell wall biogenesis; peptidoglycan biosynthesis. Functionally, cell wall formation. Catalyzes the transfer of a GlcNAc subunit on undecaprenyl-pyrophosphoryl-MurNAc-pentapeptide (lipid intermediate I) to form undecaprenyl-pyrophosphoryl-MurNAc-(pentapeptide)GlcNAc (lipid intermediate II). The protein is UDP-N-acetylglucosamine--N-acetylmuramyl-(pentapeptide) pyrophosphoryl-undecaprenol N-acetylglucosamine transferase of Shewanella amazonensis (strain ATCC BAA-1098 / SB2B).